The primary structure comprises 199 residues: Heparin-binding hemagglutinin (199 aa).

Over residues 162 to 180 the composition is skewed to low complexity; the sequence is KAAPAKKAAPAKKAAPAKK. Residues 162–199 form a disordered region; the sequence is KAAPAKKAAPAKKAAPAKKAAAKKAPAKKAAAKKVTQK. The segment covering 181–199 has biased composition (basic residues); it reads AAAKKAPAKKAAAKKVTQK.

To M.leprae HbhA. Glycosylated. Glycosylation may protect the protein from proteolytic degradation and be important for hemagglutination. It suggests that the carbohydrate moiety may be located within the C-terminal domain of HbhA.

The protein resides in the cell surface. Required for extrapulmonary dissemination. Mediates adherence to epithelial cells by binding to sulfated glycoconjugates present at the surface of these cells. The protein is Heparin-binding hemagglutinin (hbhA) of Mycobacterium tuberculosis (strain CDC 1551 / Oshkosh).